We begin with the raw amino-acid sequence, 128 residues long: Ribonuclease P protein component (128 aa).

This sequence belongs to the RnpA family. Consists of a catalytic RNA component (M1 or rnpB) and a protein subunit.

It carries out the reaction Endonucleolytic cleavage of RNA, removing 5'-extranucleotides from tRNA precursor.. In terms of biological role, RNaseP catalyzes the removal of the 5'-leader sequence from pre-tRNA to produce the mature 5'-terminus. It can also cleave other RNA substrates such as 4.5S RNA. The protein component plays an auxiliary but essential role in vivo by binding to the 5'-leader sequence and broadening the substrate specificity of the ribozyme. This Synechococcus sp. (strain CC9902) protein is Ribonuclease P protein component.